Reading from the N-terminus, the 158-residue chain is Transcriptional repressor NrdR (158 aa).

The segment at 3–34 is a zinc-finger region; the sequence is CPSCQNTDSRVLESRAADGGRSVRRRRECLNC. The ATP-cone domain maps to 49–139; the sequence is ITVIKRDGCR…VYRQFRGIDD (91 aa).

This sequence belongs to the NrdR family. Zn(2+) is required as a cofactor.

Negatively regulates transcription of bacterial ribonucleotide reductase nrd genes and operons by binding to NrdR-boxes. The protein is Transcriptional repressor NrdR of Synechococcus sp. (strain CC9902).